Consider the following 374-residue polypeptide: Trichodiene synthase (374 aa).

7 residues coordinate Mg(2+): aspartate 100, glutamate 164, asparagine 225, serine 229, glutamate 233, aspartate 239, and isoleucine 241. An aspartate-rich domain region spans residues aspartate 100–aspartate 104.

The protein belongs to the trichodiene synthase family. It depends on Mg(2+) as a cofactor. Mn(2+) is required as a cofactor.

The catalysed reaction is (2E,6E)-farnesyl diphosphate = trichodiene + diphosphate. It functions in the pathway sesquiterpene biosynthesis; trichothecene biosynthesis. With respect to regulation, benzyl triethylammonium cation (BTAC) acts as a competitive inhibitor of trichodiene synthase reaction in the presence of pyrophosphate (PPi). Trichodiene synthase; part of the core gene cluster that mediates the biosynthesis of trichothecenes, a very large family of chemically related bicyclic sesquiterpene compounds acting as mycotoxins, including T2-toxin. The biosynthesis of trichothecenes begins with the cyclization of farnesyl diphosphate to trichodiene and is catalyzed by the trichodiene synthase TRI5. Trichodiene undergoes a series of oxygenations catalyzed by the cytochrome P450 monooxygenase TRI4. TRI4 controls the addition of four oxygens at C-2, C-3, C-11, and the C-12, C-13-epoxide to form the intermediate isotrichotriol. Isotrichotriol then undergoes a non-enzymatic isomerization and cyclization to form isotrichodermol. During this process, the oxygen at the C-2 position becomes the pyran ring oxygen and the hydroxyl group at C-11 is lost. More complex type A trichothecenes are built by modifying isotrichodermol through a series of paired hydroxylation and acetylation or acylation steps. Isotrichodermol is converted to isotrichodermin by the acetyltransferase TRI101. TRI101 encodes a C-3 transacetylase that acts as a self-protection or resistance factor during biosynthesis and that the presence of a free C-3 hydroxyl group is a key component of Fusarium trichothecene phytotoxicity. A second hydroxyl group is added to C-15 by the trichothecene C-15 hydroxylase TRI11, producing 15-decalonectrin, which is then acetylated by TRI3, producing calonectrin. A third hydroxyl group is added at C-4 by the cytochrome P450 monooxygenase TRI13, converting calonectrin to 3,15-diacetoxyspirpenol, which is subsequently acetylated by the acetyltransferase TRI7. A fourth hydroxyl group is added to C-8 by the cytochrome P450 monooxygenase TRI1, followed by the addition of an isovaleryl moiety by TRI16. Finally, the acetyl group is removed from the C-3 position by the trichothecene C-3 esterase TRI8 to produce T-2 toxin. The sequence is that of Trichodiene synthase from Fusarium sporotrichioides.